The chain runs to 801 residues: Quinoprotein glucose dehydrogenase A (801 aa).

A signal peptide spans 1 to 33 (MNQPTSRSGLTTFTVIIIGLLALFLLIGGIWLA). 4 helical membrane passes run 39–55 (IYYIIAGVLLLIVAWQL), 59–79 (ASTALWFYAALMLGTIIWSVW), 94–108 (ILGILGLWLLVPAVT), and 119–138 (VALSSTLAIAIVLMVYSIFN). The active-site Proton acceptor is the aspartate 471.

It belongs to the bacterial PQQ dehydrogenase family. Monomer. Pyrroloquinoline quinone serves as cofactor.

It localises to the cell inner membrane. It carries out the reaction D-glucose + A = D-glucono-1,5-lactone + AH2. In terms of biological role, catalyzes an exceptionally high rate of oxidation of a wide range of aldose sugars, including D-glucose, galactose, arabinose and xylose, and also the disaccharides lactose, cellobiose and maltose. In Acinetobacter calcoaceticus, this protein is Quinoprotein glucose dehydrogenase A (gdhA).